The primary structure comprises 127 residues: Large ribosomal subunit protein bL17 (127 aa).

Belongs to the bacterial ribosomal protein bL17 family. Part of the 50S ribosomal subunit. Contacts protein L32.

This Xanthomonas campestris pv. campestris (strain 8004) protein is Large ribosomal subunit protein bL17.